Here is a 386-residue protein sequence, read N- to C-terminus: Cell division protein FtsZ (386 aa).

GTP contacts are provided by residues 20–24 (GGGGN), 107–109 (GTG), glutamate 138, arginine 142, and asparagine 186. The disordered stretch occupies residues 350 to 377 (LNQEQKTAAKAVNEQNAQGSKEPDYLDI).

Belongs to the FtsZ family. Homodimer. Polymerizes to form a dynamic ring structure in a strictly GTP-dependent manner. Interacts directly with several other division proteins.

It is found in the cytoplasm. In terms of biological role, essential cell division protein that forms a contractile ring structure (Z ring) at the future cell division site. The regulation of the ring assembly controls the timing and the location of cell division. One of the functions of the FtsZ ring is to recruit other cell division proteins to the septum to produce a new cell wall between the dividing cells. Binds GTP and shows GTPase activity. This Sodalis glossinidius protein is Cell division protein FtsZ.